The sequence spans 374 residues: N5-carboxyaminoimidazole ribonucleotide synthase (374 aa).

ATP-binding positions include R108, K148, 153–159 (GYDGKGQ), 183–186 (EQFL), E191, H214, and 266–267 (NE). Residues 112–296 (KQTLQKAGSK…QFDTHILAVT (185 aa)) enclose the ATP-grasp domain.

This sequence belongs to the PurK/PurT family. As to quaternary structure, homodimer.

The catalysed reaction is 5-amino-1-(5-phospho-beta-D-ribosyl)imidazole + hydrogencarbonate + ATP = 5-carboxyamino-1-(5-phospho-D-ribosyl)imidazole + ADP + phosphate + 2 H(+). It participates in purine metabolism; IMP biosynthesis via de novo pathway; 5-amino-1-(5-phospho-D-ribosyl)imidazole-4-carboxylate from 5-amino-1-(5-phospho-D-ribosyl)imidazole (N5-CAIR route): step 1/2. Functionally, catalyzes the ATP-dependent conversion of 5-aminoimidazole ribonucleotide (AIR) and HCO(3)(-) to N5-carboxyaminoimidazole ribonucleotide (N5-CAIR). The protein is N5-carboxyaminoimidazole ribonucleotide synthase of Staphylococcus haemolyticus (strain JCSC1435).